A 116-amino-acid polypeptide reads, in one-letter code: Iron-sulfur cluster insertion protein ErpA (116 aa).

C44, C108, and C110 together coordinate iron-sulfur cluster.

The protein belongs to the HesB/IscA family. In terms of assembly, homodimer. It depends on iron-sulfur cluster as a cofactor.

Its function is as follows. Required for insertion of 4Fe-4S clusters for at least IspG. The sequence is that of Iron-sulfur cluster insertion protein ErpA from Shewanella halifaxensis (strain HAW-EB4).